Here is a 588-residue protein sequence, read N- to C-terminus: MSGAQRRKTGCWTCRLRRKKCNEDGQPCSNCEARGVFCHGYGPKPSWKDRGEREREEAQRLQLISRARTRRARATPTNSINGEPRRPSIDMNTSDMGSPIQMGLGSSDSSIFETSSLDLLDIPELGSSLWEPTLDIIQVQPPPSDAPSALQFPSILGDGLEEKEIDLIMYYVVEVFPRQHSSYQGTSVMERSWLLCVLKRSSSFYYTSLSLSAHYRLMSMPEGGQGRTALLQEYERYKTCSLFRFQELVSSATRPQSPISTGVVGESVICGVQIAMLEAVSKNMQSSYLHLSSAALSLAQLLDNTSTLDSSSISTNTTPPSSVLTTDLYHAGSMEYKALRCFSIILIWNDILHCSAQQTIPAAAKTYQKLLADESFIPLFADIVGCEGWVLVPILEAMLLASWKKDQEAKGQLSIRELLTKVDHIESILGDRMKRLAPAVLRQKEAGISSQSPEQIRLVHTYIFAHASFVHLHTVVSGAQPSVPEIRQSIDKSLAAWQLLPPSLINFKTMAWPFCVCGSMAVGSQRELFQKIMSENFQNQSTSSNLHCLKSVVEECWKNFDKRVPEQSPSSYNWKVVMEKLNLSILFI.

Residues 11 to 38 (CWTCRLRRKKCNEDGQPCSNCEARGVFC) constitute a DNA-binding region (zn(2)-C6 fungal-type). The tract at residues 68 to 92 (RTRRARATPTNSINGEPRRPSIDMN) is disordered.

The protein localises to the nucleus. Its function is as follows. Transcription factor that regulates the expression of the gene cluster that mediates the biosynthesis of ustiloxin B, an antimitotic tetrapeptide. This Aspergillus flavus (strain ATCC 200026 / FGSC A1120 / IAM 13836 / NRRL 3357 / JCM 12722 / SRRC 167) protein is ustiloxin B cluster transcription factor ustR.